The primary structure comprises 184 residues: Ribosome-recycling factor (184 aa).

This sequence belongs to the RRF family.

Its subcellular location is the cytoplasm. Responsible for the release of ribosomes from messenger RNA at the termination of protein biosynthesis. May increase the efficiency of translation by recycling ribosomes from one round of translation to another. The protein is Ribosome-recycling factor of Acinetobacter baylyi (strain ATCC 33305 / BD413 / ADP1).